Reading from the N-terminus, the 630-residue chain is Alpha-1,4-glucan:maltose-1-phosphate maltosyltransferase (630 aa).

Residues Arg-234, Gln-294, and Asp-329 each coordinate alpha-maltose 1-phosphate. Asp-365 (nucleophile) is an active-site residue. Asn-366 contributes to the alpha-maltose 1-phosphate binding site. The active-site Proton donor is Glu-394. 504–505 serves as a coordination point for alpha-maltose 1-phosphate; that stretch reads KY.

The protein belongs to the glycosyl hydrolase 13 family. GlgE subfamily. As to quaternary structure, homodimer.

It catalyses the reaction alpha-maltose 1-phosphate + [(1-&gt;4)-alpha-D-glucosyl](n) = [(1-&gt;4)-alpha-D-glucosyl](n+2) + phosphate. In terms of biological role, maltosyltransferase that uses maltose 1-phosphate (M1P) as the sugar donor to elongate linear or branched alpha-(1-&gt;4)-glucans. Is involved in a branched alpha-glucan biosynthetic pathway from trehalose, together with TreS, Mak and GlgB. The protein is Alpha-1,4-glucan:maltose-1-phosphate maltosyltransferase of Picrophilus torridus (strain ATCC 700027 / DSM 9790 / JCM 10055 / NBRC 100828 / KAW 2/3).